A 925-amino-acid polypeptide reads, in one-letter code: MIKVFKDLKFLILITIILLNLKSINCKIIYGDSVSFERVLSPQLGKNITLPWGKDKVIHLCNPHGEESIPVLVSNNIPLGKLASNDENFLAIFGNQSFARLLAHFNCKKTEETCIRLRTDLPVFTSCLLIGSVDGFDHVTFNSSLSGVPTNMNSWNVDTVGKFSNNLTSAGRIIVKNDNNQISLGCFEEGDKNNLNYILMHPNNPIDTIDICYKSFNEESEYVLYGLVECGDTSKSSFSISGYVFFDKYYSSSRINNPPVAGQIVYIQQKNGVVYDLDGKRVNQTITDARGFYYFNNIPGGDYQVYITPSDPDTLYSPDVDSNLQDPYTNKATNGSIETYIYINGSGVVPVSKTNFDDIKLTSVYVIREMNIGILPKNISMEGLVFIDYNANGQMDTAVTNTSAQDKPYSGVRVQLLDENRVVRDVITGDDGIFSFPDVPYVSTGYIAVIYTPSGNVMTNYPFPPSPLAGEIINLEIVPNNILLVGLINNENYCQDSPLMAIICYANQGYNESHADDPVLITFPSNANKHLYNMPHGTVQHIATHKEIGSVYGVGVDRVNGDIYTSAFMKYYSGFGPSGTGAIYKSTTKNNDYQTSLYFDLNKAMNQEDYCGTDSHIYPMDNYDGGVEKVGKIAFGDLDIHNGSLYTIALATKELLRVSISDPRDFQLYNIYNPCIEEPDDWRPFALGLRHGNIIIGGVCSKESDSTNIPVGYIMEMSGNILLTVPMDFPRGCKSFGGSFCIPGEYSAWSSVYFESQPWISDLTMDGEDMIISIRDRGGDLDRDVGTYDMLRACFDGDQLILENSGICGGVPGAHLLPSGYFGTPDGINSGEYYNDNFYYPTDNDGHDNVASTSGVVIPGYHTLFGSSLDIDSVGQGTVKVWDNKNGLLLYGIGVYLQSNENPTNNFGKANGLGDMEPICYNYIK.

An N-terminal signal peptide occupies residues 1-26 (MIKVFKDLKFLILITIILLNLKSINC). N47, N95, N142, N166, N283, N334, N344, N378, N401, N511, and N642 each carry an N-linked (GlcNAc...) asparagine glycan.

It belongs to the serine-aspartate repeat-containing protein (SDr) family.

It localises to the secreted. The sequence is that of Colossin-D (colD) from Dictyostelium discoideum (Social amoeba).